The following is a 104-amino-acid chain: L-rhamnose mutarotase (104 aa).

Substrate is bound at residue tyrosine 18. Histidine 22 (proton donor) is an active-site residue. Substrate is bound by residues tyrosine 41 and tryptophan 76 to tryptophan 77.

This sequence belongs to the rhamnose mutarotase family. As to quaternary structure, homodimer.

It localises to the cytoplasm. The catalysed reaction is alpha-L-rhamnose = beta-L-rhamnose. It functions in the pathway carbohydrate metabolism; L-rhamnose metabolism. Functionally, involved in the anomeric conversion of L-rhamnose. This Burkholderia cenocepacia (strain HI2424) protein is L-rhamnose mutarotase.